The primary structure comprises 125 residues: UPF0231 protein APP7_1023 (125 aa).

Belongs to the UPF0231 family.

The chain is UPF0231 protein APP7_1023 from Actinobacillus pleuropneumoniae serotype 7 (strain AP76).